The sequence spans 348 residues: Fe(3+) ions import ATP-binding protein FbpC (348 aa).

The ABC transporter domain maps to 6-236; the sequence is LSLEGATVRF…PADAFVARFL (231 aa). An ATP-binding site is contributed by 38-45; it reads GPSGSGKS.

It belongs to the ABC transporter superfamily. Fe(3+) ion importer (TC 3.A.1.10) family. The complex is composed of two ATP-binding proteins (FbpC), two transmembrane proteins (FbpB) and a solute-binding protein (FbpA).

It is found in the cell membrane. It carries out the reaction Fe(3+)(out) + ATP + H2O = Fe(3+)(in) + ADP + phosphate + H(+). In terms of biological role, part of the ABC transporter complex FbpABC involved in Fe(3+) ions import. Responsible for energy coupling to the transport system. The polypeptide is Fe(3+) ions import ATP-binding protein FbpC (Streptomyces coelicolor (strain ATCC BAA-471 / A3(2) / M145)).